The sequence spans 528 residues: Succinate-semialdehyde dehydrogenase, mitochondrial (528 aa).

A mitochondrion-targeting transit peptide spans 1 to 34 (MVIGAAARVAIGGCRKLISSHTSLLLVSSQCRQM). Residue 196 to 198 (TPW) participates in NAD(+) binding. Position 207 (Arg-207) interacts with substrate. NAD(+) is bound by residues 222–225 (KPSE), 275–280 (GSTAVG), and Glu-297. Residue Glu-297 is the Proton acceptor of the active site. Position 325 (Arg-325) interacts with substrate. The active-site Nucleophile is the Cys-331. Cys-331 and Cys-333 are disulfide-bonded. 428–430 (EIF) is a binding site for NAD(+). Residue Ser-488 participates in substrate binding.

Belongs to the aldehyde dehydrogenase family. Homotetramer. In terms of tissue distribution, expressed in developing leaf tissues.

It localises to the mitochondrion matrix. The catalysed reaction is succinate semialdehyde + NAD(+) + H2O = succinate + NADH + 2 H(+). The protein operates within amino-acid degradation; 4-aminobutanoate degradation. Its activity is regulated as follows. Competitive inhibition by NADH. Inhibited by ATP, ADP and AMP. Redox-regulated. Inhibited under oxydizing conditions. Its function is as follows. Oxidizes specifically succinate semialdehyde. Involved in plant response to environmental stress by preventing the accumulation of reactive oxygen species, probably by regulating proline, gamma-hydroxybutyrate (GHB) and gamma-aminobutyrate (GABA) levels. Required for the maintenance of the shoot apical meristem (SAM) structure and subsequent adaxial-abaxial axis-dependent development of cotyledons and leaves. This chain is Succinate-semialdehyde dehydrogenase, mitochondrial, found in Arabidopsis thaliana (Mouse-ear cress).